The sequence spans 549 residues: Ribosomal protein S6 kinase-like 1 (549 aa).

Positions 87–115 constitute an MIT domain; that stretch reads IHVDPNKERREAVKLKITKYLRRAEEIFN. Residues 145–539 form the Protein kinase domain; the sequence is SAVEQLRGCR…VSKLKSHPFF (395 aa). Residues 151-159 and K177 contribute to the ATP site; that span reads RGCRVVGVI. Residues 260-325 form a disordered region; the sequence is LTPARLPSGH…SDLPKAPGGH (66 aa). D412 (proton acceptor) is an active-site residue.

The protein belongs to the protein kinase superfamily. Ser/Thr protein kinase family. S6 kinase subfamily.

The enzyme catalyses L-seryl-[protein] + ATP = O-phospho-L-seryl-[protein] + ADP + H(+). It carries out the reaction L-threonyl-[protein] + ATP = O-phospho-L-threonyl-[protein] + ADP + H(+). This Pongo abelii (Sumatran orangutan) protein is Ribosomal protein S6 kinase-like 1 (RPS6KL1).